We begin with the raw amino-acid sequence, 644 residues long: VKVELDKKVQSLQDEVAFLRTNHEEEVADLLAQIQASHITVERKDYLKTDISSALKEIRSQLECHSDQNMHQAEEWFKCRYAKLTEAAEQNKEAIRSAKEEIAEYRRQLQSKSIELESVAWHKESLERHVSDIEERHNHDLSSYQDTIQQLENELRGTKWEMARHLREYQDLLNVKMALDIEIAAYRKLLEGEETRFSTFSGSITGPLYTHRQPSVTISSKIQKTKVEAPKLKVQHKFVEEIIEETKVEDEKSEMEDALTAIAEELAVSVKEEEKEEEAEGKEEEQEAEEEVAAAKKSPVKATTPEIKEEEGEKEEEGQEEEEEEEDEGVKSDQAEEGGSEKEGSSKNEGEQEEGETEAEGEVEEAEAKEEKKTEEKSEEVAAKEEPVTEAKVGKPEKAKSPVPKSPVEEVKPKAEATAGKGEQKEEEEKVEEEKKKAAKESPKEEKVEKKEEKPKDVPKKKAESPVKEEAAEEAATITKPTKVGLEKETKEGEKPLQQEKEKEKAGEEGGSEEEGSDQGSKRAKKEDIAVNGEGEGKEEEEPETKEKGSGREEEKGVVTNGLDLSPADEKKGGDRSEEKVVVTKKVEKITTEGGDGATKYITKSVTAQKVEEHEETFEEKLVSTKKVEKVTSHAIVKEVTQSD.

Residues 1 to 33 (VKVELDKKVQSLQDEVAFLRTNHEEEVADLLAQ) form a coil 1B region. The region spanning 1-197 (VKVELDKKVQ…KLLEGEETRF (197 aa)) is the IF rod domain. Ser-11 is modified (phosphoserine). Residues 34 to 50 (IQASHITVERKDYLKTD) are linker 12. Residues 51–72 (ISSALKEIRSQLECHSDQNMHQ) are coil 2A. Positions 73–76 (AEEW) are linker 2. Residues 77-197 (FKCRYAKLTE…KLLEGEETRF (121 aa)) are coil 2B. A Phosphotyrosine modification is found at Tyr-105. Phosphoserine is present on residues Ser-131, Ser-203, and Ser-215. The segment at 198-643 (STFSGSITGP…HAIVKEVTQS (446 aa)) is tail. Thr-217 is a glycosylation site (O-linked (GlcNAc) threonine). Ser-253 and Ser-269 each carry phosphoserine. The segment at 270-582 (VKEEEKEEEA…GGDRSEEKVV (313 aa)) is disordered. Residues 274–292 (EKEEEAEGKEEEQEAEEEV) show a composition bias toward acidic residues. Ser-298 bears the Phosphoserine mark. Over residues 308–328 (KEEEGEKEEEGQEEEEEEEDE) the composition is skewed to acidic residues. Residues 329 to 350 (GVKSDQAEEGGSEKEGSSKNEG) show a composition bias toward basic and acidic residues. Residues Ser-332, Ser-340, Ser-345, and Ser-346 each carry the phosphoserine modification. Residues 351–368 (EQEEGETEAEGEVEEAEA) are compositionally biased toward acidic residues. Phosphothreonine is present on Thr-357. Basic and acidic residues predominate over residues 369-400 (KEEKKTEEKSEEVAAKEEPVTEAKVGKPEKAK). A phosphoserine mark is found at Ser-401, Ser-406, Ser-442, and Ser-465. Residues 422 to 470 (GEQKEEEEKVEEEKKKAAKESPKEEKVEKKEEKPKDVPKKKAESPVKEE) are compositionally biased toward basic and acidic residues. Positions 474–483 (EAATITKPTK) are enriched in low complexity. The span at 485–508 (GLEKETKEGEKPLQQEKEKEKAGE) shows a compositional bias: basic and acidic residues. 3 positions are modified to phosphoserine: Ser-512, Ser-550, and Ser-566. The span at 545-557 (TKEKGSGREEEKG) shows a compositional bias: basic and acidic residues. Basic and acidic residues predominate over residues 568-582 (ADEKKGGDRSEEKVV).

It belongs to the intermediate filament family. Forms heterodimers with NEFL; which can further hetero-oligomerize (in vitro). Forms heterodimers with INA (in vitro). Post-translationally, there are a number of repeats of the tripeptide K-S-P, NFM is phosphorylated on a number of the serines in this motif. It is thought that phosphorylation of NFM results in the formation of interfilament cross bridges that are important in the maintenance of axonal caliber. Phosphorylation seems to play a major role in the functioning of the larger neurofilament polypeptides (NF-M and NF-H), the levels of phosphorylation being altered developmentally and coincidentally with a change in the neurofilament function. In terms of processing, phosphorylated in the head and rod regions by the PKC kinase PKN1, leading to the inhibition of polymerization.

The protein localises to the cytoplasm. Its subcellular location is the cytoskeleton. It localises to the cell projection. The protein resides in the axon. Its function is as follows. Neurofilaments usually contain three intermediate filament proteins: NEFL, NEFM, and NEFH which are involved in the maintenance of neuronal caliber. May additionally cooperate with the neuronal intermediate filament proteins PRPH and INA to form neuronal filamentous networks. This chain is Neurofilament medium polypeptide (NEFM), found in Oryctolagus cuniculus (Rabbit).